Consider the following 326-residue polypeptide: Large ribosomal subunit protein uL4 (326 aa).

Residues 1 to 211 are large ribosomal subunit protein uL4; it reads MASCVVKNWQ…EKLKARWGSG (211 aa). Disordered regions lie at residues 44-76 and 211-326; these read ARQG…ARAG and GAAA…EDND. Over residues 60 to 71 the composition is skewed to basic residues; that stretch reads GGRKPWRQKGTG. The interval 212-326 is unknown; the sequence is AAAAAPTQAD…TAAAEEEDND (115 aa). The segment covering 221–238 has biased composition (basic and acidic residues); that stretch reads DRLEDQAQAAEREARPVE. Low complexity-rich tracts occupy residues 252–279 and 294–312; these read EAQA…QVQE and QGQA…PPAG. Over residues 313–326 the composition is skewed to acidic residues; the sequence is EEAETAAAEEEDND.

This sequence belongs to the universal ribosomal protein uL4 family. Part of the 50S ribosomal subunit.

Its function is as follows. One of the primary rRNA binding proteins, this protein initially binds near the 5'-end of the 23S rRNA. It is important during the early stages of 50S assembly. It makes multiple contacts with different domains of the 23S rRNA in the assembled 50S subunit and ribosome. In terms of biological role, forms part of the polypeptide exit tunnel. The protein is Large ribosomal subunit protein uL4 of Synechococcus sp. (strain JA-3-3Ab) (Cyanobacteria bacterium Yellowstone A-Prime).